The primary structure comprises 216 residues: Peroxiredoxin (216 aa).

Positions 2–158 (IVIGEKFPEV…ILRLVKALKI (157 aa)) constitute a Thioredoxin domain. Cys-46 functions as the Cysteine sulfenic acid (-SOH) intermediate in the catalytic mechanism. Arg-121 is a substrate binding site. A disulfide bridge links Cys-205 with Cys-211.

It belongs to the peroxiredoxin family. Prx6 subfamily. As to quaternary structure, homodecamer. Pentamer of dimers that assemble into a ring structure.

Its subcellular location is the cytoplasm. It catalyses the reaction a hydroperoxide + [thioredoxin]-dithiol = an alcohol + [thioredoxin]-disulfide + H2O. Thiol-specific peroxidase that catalyzes the reduction of hydrogen peroxide and organic hydroperoxides to water and alcohols, respectively. Plays a role in cell protection against oxidative stress by detoxifying peroxides. The sequence is that of Peroxiredoxin from Pyrococcus furiosus (strain ATCC 43587 / DSM 3638 / JCM 8422 / Vc1).